A 38-amino-acid polypeptide reads, in one-letter code: Putative defensin-like protein 105 (38 aa).

Intrachain disulfides connect Cys-5–Cys-27, Cys-13–Cys-33, and Cys-17–Cys-34.

The protein belongs to the DEFL family.

In Arabidopsis thaliana (Mouse-ear cress), this protein is Putative defensin-like protein 105.